A 1867-amino-acid polypeptide reads, in one-letter code: Probable serine/threonine-protein kinase roco8 (1867 aa).

The 78-residue stretch at 16 to 93 (SSDGLQIKDR…DDYIFYQFDN (78 aa)) folds into the DEP 1 domain. Disordered regions lie at residues 96 to 115 (NNNNINNNNNNATSTATTAT) and 121 to 225 (VSTK…NSFN). A compositionally biased stretch (low complexity) spans 121 to 223 (VSTKIGSIGK…NSNSTYNSNS (103 aa)). The DEP 2 domain maps to 264–342 (GDKGLKLQKK…NNNNGGGGVM (79 aa)). LRR repeat units follow at residues 491-512 (RLDDLCLTHKCISIIPTTIINT), 515-536 (FLRIIDLSFNQLSESNQLESIA), 540-561 (NLESCNLSHNQLSTLPSSFSRL), 563-584 (LLTKLILSHNCFQVIPNVVFQL), 586-607 (NLEELSLAANQLSSISESIGSL), 609-631 (SLEKLDLSFNKQINKIPKELGLL), 633-656 (RLKSLNVLGSNKINELPSFLSTLP), and 657-678 (LLEQLDFSRDIIKSPPKEITSK). Residues 693–941 (GTETLSHIKL…NEIIQTLLNQ (249 aa)) form the Roc domain. 2 disordered regions span residues 763–813 (QNGI…KKRP) and 942–961 (SNNNNNNNNNNNYNNNKQSN). Low complexity predominate over residues 768-793 (TSSSNLNLSTGTLPPPTQLSSSTSEL). In terms of domain architecture, COR spans 974 to 1111 (PSIYITLETN…ILYTLKNNSN (138 aa)). Residues 1163-1207 (SPSLSLSNSSQSVFTNPNNNNNNKSEQQQQQQQQQQQPQPISTSP) form a disordered region. Residues 1456–1864 (LIYQEEIGVG…TLNEIKDSTI (409 aa)) enclose the Protein kinase domain. Residues 1462 to 1470 (IGVGGFSRV) and Lys-1483 contribute to the ATP site. The segment at 1509 to 1546 (SNSSLSISLSSSTSSLSPPIVNNNNNNNNLNNNLNNLN) is disordered. Asp-1721 serves as the catalytic Proton acceptor.

This sequence belongs to the protein kinase superfamily. TKL Ser/Thr protein kinase family. ROCO subfamily.

It carries out the reaction L-seryl-[protein] + ATP = O-phospho-L-seryl-[protein] + ADP + H(+). The enzyme catalyses L-threonyl-[protein] + ATP = O-phospho-L-threonyl-[protein] + ADP + H(+). The chain is Probable serine/threonine-protein kinase roco8 (roco8) from Dictyostelium discoideum (Social amoeba).